The primary structure comprises 915 residues: MAPSSPSSARPTRASGRKRSAMAEEIHQNQEEEEEVVAASTAKRRRKAASSGKKPKPTPKQAKPAVAGMKKKGETEKTEPVVDDVCAEEPDEEELAMGEEEAEAEEQAMQEVVAAVAAGSPGKKRVGRRSAAASGDHVPEFIGSPVAAAEAHSNWPKRYERSTAANKPEEDDELKARCHYRSAKVDNIVYCLGDDVYVKAGENEADYIGRITEFFEGTDRCHYFTCRWFFRAEDTVINSLVSINVDGHKHDPRRVFLSEEKNDNVLDCIISKVKIVHVDPNMDPKAKAQLIEHCDLYYDMSYSVAYSTFANISSENGQSGSETASGISSDDAGLETSSNMPERTATLLDLYSGCGGMSTGLCLGAALSGLKLETRWAVDLNSFACQSLKYNHPQTEVRNEKADEFLALLKEWAVLCEKYVHQDVDSNLAGSEDQEDADTLDKDEFVVQKLIGIRYDGTGRKKGVYFKVQWEGYGPEEDTWEPIDNLSDCPLKIREFVQEGRKRKILPLPGDVDVICGGPPCQGISGFNRFRNRDEPLKDEKNKQMVTFMDIVAYLKPKYVLMENVVDILKFADGYLGKYALSCLVAMKYQARLGMMVAGCYGLPQFRMRVFLWGALSSMVLPKYPLPTYDVVVRGGAPNAFSQCMVAYDETQRPSLKKALLLGDAFSDLPKVENHQPNDVMEYGGSPKTEFQRYIRLGRKDMLDWSFGEEAGPDEGKLLDHQPLRLNNDDYERVKQIPVKKGANFRDLKGVKVGANNVVEWDPEVERVYLSSGKPLVPDYAMSFIKGKSLKPFGRLWWDETVPTVVTRAEPHNQVILHPTQARVLTIRENARLQGFPDYYRLFGPIKEKYIQVGNAVAVPVARALGYCLGQAYLGESDGSQPLYQLPASFTSVGRTAVQANAVSVGTPAGEVVEQ.

Over residues 1 to 14 the composition is skewed to low complexity; sequence MAPSSPSSARPTRA. Disordered stretches follow at residues 1–107 and 152–171; these read MAPS…AEEQ and HSNW…PEED. Residues 21-30 show a composition bias toward basic and acidic residues; that stretch reads AMAEEIHQNQ. Residues 42–57 are compositionally biased toward basic residues; it reads AKRRRKAASSGKKPKP. Residues 71-80 show a composition bias toward basic and acidic residues; sequence KKGETEKTEP. Residues 81 to 107 are compositionally biased toward acidic residues; that stretch reads VVDDVCAEEPDEEELAMGEEEAEAEEQ. The BAH domain maps to 188–313; that stretch reads IVYCLGDDVY…VAYSTFANIS (126 aa). Residues 315-328 are compositionally biased toward polar residues; sequence ENGQSGSETASGIS. Residues 315 to 338 form a disordered region; the sequence is ENGQSGSETASGISSDDAGLETSS. Residues 345–876 enclose the SAM-dependent MTase C5-type domain; that stretch reads ATLLDLYSGC…YCLGQAYLGE (532 aa). Positions 445–508 constitute a Chromo domain; the sequence is FVVQKLIGIR…EGRKRKILPL (64 aa). Cys-521 is an active-site residue.

The protein belongs to the class I-like SAM-binding methyltransferase superfamily. C5-methyltransferase family.

The protein resides in the nucleus. It catalyses the reaction a 2'-deoxycytidine in DNA + S-adenosyl-L-methionine = a 5-methyl-2'-deoxycytidine in DNA + S-adenosyl-L-homocysteine + H(+). Functionally, may be involved in the CpXpG methylation and in gene silencing. The chain is DNA (cytosine-5)-methyltransferase 3 (DMT105) from Zea mays (Maize).